A 100-amino-acid chain; its full sequence is Urease subunit gamma 2 (100 aa).

The protein belongs to the urease gamma subunit family. In terms of assembly, heterotrimer of UreA (gamma), UreB (beta) and UreC (alpha) subunits. Three heterotrimers associate to form the active enzyme.

The protein localises to the cytoplasm. It carries out the reaction urea + 2 H2O + H(+) = hydrogencarbonate + 2 NH4(+). It participates in nitrogen metabolism; urea degradation; CO(2) and NH(3) from urea (urease route): step 1/1. The protein is Urease subunit gamma 2 of Psychrobacter cryohalolentis (strain ATCC BAA-1226 / DSM 17306 / VKM B-2378 / K5).